A 517-amino-acid polypeptide reads, in one-letter code: UDP-N-acetylmuramyl-tripeptide synthetase (517 aa).

Threonine 48 serves as a coordination point for UDP-N-acetyl-alpha-D-muramoyl-L-alanyl-D-glutamate. 125-131 (GTKGKTT) contacts ATP. Residues 169-170 (TT), serine 196, and arginine 204 contribute to the UDP-N-acetyl-alpha-D-muramoyl-L-alanyl-D-glutamate site. Lysine 238 carries the N6-carboxylysine modification.

This sequence belongs to the MurCDEF family. MurE subfamily. Carboxylation is probably crucial for Mg(2+) binding and, consequently, for the gamma-phosphate positioning of ATP.

Its subcellular location is the cytoplasm. It functions in the pathway cell wall biogenesis; peptidoglycan biosynthesis. In terms of biological role, catalyzes the addition of an amino acid to the nucleotide precursor UDP-N-acetylmuramoyl-L-alanyl-D-glutamate (UMAG) in the biosynthesis of bacterial cell-wall peptidoglycan. This Bifidobacterium longum (strain NCC 2705) protein is UDP-N-acetylmuramyl-tripeptide synthetase.